The following is a 93-amino-acid chain: MSESSARTEMKISLPENLVAELDGVAMREKRSRNELISQAVRAYVSERTTRHNRDLMRRGYMEMAKINLNISSEAHFAECEAETTVERLVSGG.

It belongs to the MazE/EndoAI family. In terms of assembly, homodimer, forms a heterohexamer composed of alternating toxin and antitoxin homodimers which inhibits the toxin's endoribonuclease activity. Antitoxin prevents RNA binding to the endoribonuclease.

In terms of biological role, antitoxin component of a type II toxin-antitoxin (TA) system. Antitoxin that directly inhibits activity of EndoA in vitro. Upon expression in E.coli counteracts inhibitory effect of endoribonuclease EndoA. The EndoA-EndoAI complex does not seem to bind its own promoter. This is Antitoxin EndoAI from Bacillus subtilis (strain 168).